We begin with the raw amino-acid sequence, 541 residues long: Paromamine 6'-oxidase (541 aa).

The disordered stretch occupies residues 1–29; it reads MKRLRGTLPSDARHAWHPEPLGPAHRDGW. Catalysis depends on His-470, which acts as the Proton acceptor.

It belongs to the GMC oxidoreductase family. Requires FAD as cofactor.

The enzyme catalyses 6'''-deamino-6'''-hydroxyneomycin C + O2 = 6'''-deamino-6'''-oxoneomycin C + H2O2. It catalyses the reaction paromamine + O2 = 6'-oxoparomamine + H2O2. It functions in the pathway antibiotic biosynthesis; neomycin biosynthesis. In terms of biological role, glucosaminyl-6'-oxidase involved in the biosynthetic pathway of neomycin by mediating FAD-dependent dehydrogenation of paromamine to 6'-dehydro-6'-oxoparomamine. Works in combination with neamine transaminase to replace the 6-hydroxy group of paromamine with an amino group. Also able to collaborate with neomycin C transaminase to replace the 6'''-hydroxy group of 6'''-hydroxyneomycin C with an amino group. In Streptomyces fradiae (Streptomyces roseoflavus), this protein is Paromamine 6'-oxidase (neoG).